Here is a 105-residue protein sequence, read N- to C-terminus: Large ribosomal subunit protein uL24 (105 aa).

The protein belongs to the universal ribosomal protein uL24 family. In terms of assembly, part of the 50S ribosomal subunit.

In terms of biological role, one of two assembly initiator proteins, it binds directly to the 5'-end of the 23S rRNA, where it nucleates assembly of the 50S subunit. Functionally, one of the proteins that surrounds the polypeptide exit tunnel on the outside of the subunit. The chain is Large ribosomal subunit protein uL24 from Nitrosococcus oceani (strain ATCC 19707 / BCRC 17464 / JCM 30415 / NCIMB 11848 / C-107).